Consider the following 199-residue polypeptide: Chorismate pyruvate-lyase (199 aa).

This sequence belongs to the chorismate pyruvate-lyase type 2 family.

It carries out the reaction chorismate = 4-hydroxybenzoate + pyruvate. Its function is as follows. Removes the pyruvyl group from chorismate to provide 4-hydroxybenzoate (4HB). Involved in the synthesis of glycosylated p-hydroxybenzoic acid methyl esters (p-HBADs) and phenolic glycolipids (PGL) that play important roles in the pathogenesis of mycobacterial infections. The polypeptide is Chorismate pyruvate-lyase (Mycobacterium bovis (strain ATCC BAA-935 / AF2122/97)).